We begin with the raw amino-acid sequence, 1523 residues long: MADRGCPLEAAPLPAEVLESLAELELELSEGDITQKGYEKKRAKLLARYIPLIQDVHTEAVQAALAKYKERKMPMPSKRRSALVHSSVETYTPPDTSSASEDEGSLRRPGRLTSTLLQSHSGIEPWLDRVIQGSSTSSSASSTSSHPGGRPAAAPSASTALAGLTAHAHIDLHSAPPDVTTGLVEHSSYERPQMASVRGIPRGHGRNVLETADGVPVNSRVSSKIQQLLNTLKRPKRPPLKEFFVDDFEELLEVQQPDPNQPKPEGDQMAVLKGEPLSVGTNGPLSLLAALQLWGTTQPKAPCLTALDTAGKATCTLTYGKLWSRSLKLAYTLLNKLTSKNEPLLNPGDRVALVFPNSDPVMFMVAFYGCLLAELVPVPIEVPLTRKDAGSQQVGFLLGSCGVTLALTTDACQKGLPKAPTGEVATFKGWPPLAWLVIDGKHLTRPPKDWYPLAQDTGSRTAYIEYKTSKEGSTVGVTVSHSSLLAQCQALTQACGYTEAETLTNVLDFKRDAGLWHGVLTSVMNRMHVITIPYALMKVNPLSWIQKVCSYKARAALVKSRDMHWSLLAQRGQRDVCLSSLRMLIVADGANPWSISSCDAFLNVFQSRGLRPEVICPCASSPEALTVAIRRPPDLGGPPPRKAVLSMNGLSYGVIRVDTEEKLSVLTVQDVGQVMPGASVCVVKVDGAPYLCKTDEIGEICVNSVATGTAYYGLLGITKNTFETVPVTADGVPVSDRPFTRTGLLGFIGPDNLVFVVGKLDGLMVVGVRRHNADDIVATALAVEPMKFVYRGRIAVFSVTVLHDDRIVLVAEQRPDASEEDSFQWMSRVLQAIDSIHQVGVYCLALVPANTLPKAPLGGIHISETKQRFLEGTLHPCNVLMCPHTCVTNLPKPRQKQPEVGPASMIVGNLVAGKRIAQASGRELAHLEDSDQARKFLFLADVLQWRAHTTPDHPLFLLLNAKGTVTSTATCIQLHKRAERVAAALMEKGRLDAGDHVALVYPPGVDLIAAFYGCLYCGCVPVTVRPPHPQNLGTTLPTVKMIVEVSKSACVLSTQAITRLLKSKEAAAAVDVRTWPTILDTDDIPKKKVASIFRPPSPDVLAYLDFSVSTTGILAGVKMSHAATSALCRSIKLQCELYPSRQIAICLDPYCGLGFALWCLCSVYSGHQSVLVPPLELESNVSLWLSAVSQYKARVTFCSYSVMEMCTKGLGAQTGALRMKGVNLSCVRTCMVVAEERPRISLTQSFSKLFKDLGLPARAVSTTFGCRVNVAICLQGTTGPDPTTVYVDMRALRHDRVRLVERGSPHSLPLMESGKILPGVKVIIAHTETKGPLGDSHLGEIWVSSPHNATGYYTVYGEETLHADHFSARLSFGDTQTIWARTGYLGFLRRTELTDASGERHDALYVVGSLDETLELRGMRYHPIDIETSVIRAHRSIAECAVFTWTNLLVVVVELDGLEQDALDLVALVTNVVLEEHYLVVGVVVIVDPGVIPINSRGEKQRMHLRDGFLADQLDPIYVAYNM.

The DMAP1-binding domain occupies 9-105 (EAAPLPAEVL…TSSASEDEGS (97 aa)). The disordered stretch occupies residues 72–110 (KMPMPSKRRSALVHSSVETYTPPDTSSASEDEGSLRRPG). A compositionally biased stretch (polar residues) spans 87–99 (SVETYTPPDTSSA). Residues Thr-92 and Thr-115 each carry the phosphothreonine modification. The segment at 132–158 (QGSSTSSSASSTSSHPGGRPAAAPSAS) is disordered. The span at 134–158 (SSTSSSASSTSSHPGGRPAAAPSAS) shows a compositional bias: low complexity. 2 short sequence motifs (PXXP motif; required for interaction with CTTN) span residues 235–238 (PKRP) and 259–262 (PNQP).

Belongs to the DIP2 family. As to quaternary structure, interacts with FSTL1; DIP2A may act as a cell surface receptor for FSTL1. Interacts (via N-terminus) with CTTN (via SH3 domain); the interaction promotes acetylation of CTTN and is required for proper synaptic transmission. Interacts with SHANK3. In terms of tissue distribution, detected in heart, liver, spleen, lung, kidney and brain with highest levels in brain (at protein level). In adult cortex, preferentially expressed in excitatory neurons. Broadly expressed in neuronal, reproductive and vascular tissues as well as in heart, kidney, liver and lung with expression detected in neurons, mesenchyme, endothelium, smooth muscle cells and cardiomyocytes. Expressed in ectoderm-derived tissues in the developing embryo. Expressed in the developing nervous system.

It localises to the cell membrane. It is found in the mitochondrion. The protein resides in the cell projection. The protein localises to the dendritic spine. It catalyses the reaction acetate + ATP + CoA = acetyl-CoA + AMP + diphosphate. Its function is as follows. Catalyzes the de novo synthesis of acetyl-CoA in vitro. Promotes acetylation of CTTN, possibly by providing the acetyl donor, ensuring correct dendritic spine morphology and synaptic transmission. Binds to follistatin-related protein FSTL1 and may act as a cell surface receptor for FSTL1, contributing to AKT activation and subsequent FSTL1-induced survival and function of endothelial cells and cardiac myocytes. The sequence is that of Disco-interacting protein 2 homolog A (Dip2a) from Mus musculus (Mouse).